The sequence spans 578 residues: MDIFRILSRGASLNKKKGITTDYALPSEKQTQKQKHKQESLLNEVERETDFFHTRKHNSNSTTTSGKGDKLTNGANSNKEEQMETNETKAKEEEIPPPELTTEEDAQTFRNLHKSKVTGDDIPIPIGSFQDMIGRFHINKKVLSNLIDNEFVEPTPIQCESIPITLNNRDLIACAPTGSGKTLAFLIPLVQQILSKNVSKNHGIRGLIISPTNELAVQIFQELEIITRGCKQINVAILSKQLASKLNNNIIKSSKYDIIVSTPLRLIDVVKQGNMDLSKIEQLIIDEADKLFDHGFAEQTDEILTHCTNPKIRKSIFSATIPSSVEEMAHSIMKDPLRIIIGHKEAASNTIDQKLVFTGNEQGKLLAIRQMIQQGEFKPPIIIFLQSITRAKALFHELLYDRLNVDVIHAERTPKQREEVIKRFKNGDIWVLITTDVLARGVDFKGVNLVINYDVPQSAQAYVHRIGRTGRGGKAGKAVTFFTKEDDKAIKPILNVMKQSGCNDGYSQWMEDMGKLSKKEKKQIKTHEIQRKKISTVPKVIKQKRKQRQDMIAASKRRKQESKQESKQESHSNDEREE.

Positions 1 to 95 are disordered; it reads MDIFRILSRG…NETKAKEEEI (95 aa). Composition is skewed to basic and acidic residues over residues 44–53 and 78–94; these read EVERETDFFH and NKEE…KEEE. Positions 131–159 match the Q motif motif; it reads DMIGRFHINKKVLSNLIDNEFVEPTPIQC. The Helicase ATP-binding domain occupies 162–339; sequence IPITLNNRDL…HSIMKDPLRI (178 aa). 175 to 182 serves as a coordination point for ATP; that stretch reads APTGSGKT. The DEAD box motif lies at 286–289; sequence DEAD. In terms of domain architecture, Helicase C-terminal spans 350-514; sequence TIDQKLVFTG…GYSQWMEDMG (165 aa). Basic and acidic residues-rich tracts occupy residues 517-531 and 561-578; these read SKKE…EIQR and ESKQ…EREE. Positions 517–578 are disordered; the sequence is SKKEKKQIKT…ESHSNDEREE (62 aa).

Belongs to the DEAD box helicase family. DDX52/ROK1 subfamily. Interacts with the U3 snoRNA and is associated with the 90S and 40S pre-ribosomes.

It is found in the nucleus. The protein resides in the nucleolus. The catalysed reaction is ATP + H2O = ADP + phosphate + H(+). ATP-dependent RNA helicase involved in 40S ribosomal subunit biogenesis. Required for the processing and cleavage of 35S pre-rRNA at sites A0, A1, and A2, leading to mature 18S rRNA. The sequence is that of ATP-dependent RNA helicase CHR1 (CHR1) from Candida albicans (strain SC5314 / ATCC MYA-2876) (Yeast).